Consider the following 180-residue polypeptide: Ribosome-recycling factor (180 aa).

The protein belongs to the RRF family.

The protein resides in the cytoplasm. In terms of biological role, responsible for the release of ribosomes from messenger RNA at the termination of protein biosynthesis. May increase the efficiency of translation by recycling ribosomes from one round of translation to another. The chain is Ribosome-recycling factor from Chlamydia felis (strain Fe/C-56) (Chlamydophila felis).